Here is a 397-residue protein sequence, read N- to C-terminus: Succinyl-diaminopimelate desuccinylase (397 aa).

H73 is a Zn(2+) binding site. D75 is an active-site residue. D106 lines the Zn(2+) pocket. E140 functions as the Proton acceptor in the catalytic mechanism. Zn(2+) is bound by residues E141, E169, and H366.

It belongs to the peptidase M20A family. DapE subfamily. As to quaternary structure, homodimer. The cofactor is Zn(2+). It depends on Co(2+) as a cofactor.

It catalyses the reaction N-succinyl-(2S,6S)-2,6-diaminopimelate + H2O = (2S,6S)-2,6-diaminopimelate + succinate. It participates in amino-acid biosynthesis; L-lysine biosynthesis via DAP pathway; LL-2,6-diaminopimelate from (S)-tetrahydrodipicolinate (succinylase route): step 3/3. Catalyzes the hydrolysis of N-succinyl-L,L-diaminopimelic acid (SDAP), forming succinate and LL-2,6-diaminopimelate (DAP), an intermediate involved in the bacterial biosynthesis of lysine and meso-diaminopimelic acid, an essential component of bacterial cell walls. This Sinorhizobium medicae (strain WSM419) (Ensifer medicae) protein is Succinyl-diaminopimelate desuccinylase.